A 561-amino-acid chain; its full sequence is Dihydroxy-acid dehydratase (561 aa).

Position 50 (Cys-50) interacts with [2Fe-2S] cluster. Asp-82 is a Mg(2+) binding site. Residue Cys-123 coordinates [2Fe-2S] cluster. Positions 124 and 125 each coordinate Mg(2+). At Lys-125 the chain carries N6-carboxylysine. Cys-195 serves as a coordination point for [2Fe-2S] cluster. Glu-447 provides a ligand contact to Mg(2+). Ser-473 acts as the Proton acceptor in catalysis.

Belongs to the IlvD/Edd family. As to quaternary structure, homodimer. Requires [2Fe-2S] cluster as cofactor. The cofactor is Mg(2+).

The catalysed reaction is (2R)-2,3-dihydroxy-3-methylbutanoate = 3-methyl-2-oxobutanoate + H2O. It carries out the reaction (2R,3R)-2,3-dihydroxy-3-methylpentanoate = (S)-3-methyl-2-oxopentanoate + H2O. The protein operates within amino-acid biosynthesis; L-isoleucine biosynthesis; L-isoleucine from 2-oxobutanoate: step 3/4. It functions in the pathway amino-acid biosynthesis; L-valine biosynthesis; L-valine from pyruvate: step 3/4. Its function is as follows. Functions in the biosynthesis of branched-chain amino acids. Catalyzes the dehydration of (2R,3R)-2,3-dihydroxy-3-methylpentanoate (2,3-dihydroxy-3-methylvalerate) into 2-oxo-3-methylpentanoate (2-oxo-3-methylvalerate) and of (2R)-2,3-dihydroxy-3-methylbutanoate (2,3-dihydroxyisovalerate) into 2-oxo-3-methylbutanoate (2-oxoisovalerate), the penultimate precursor to L-isoleucine and L-valine, respectively. The chain is Dihydroxy-acid dehydratase from Rippkaea orientalis (strain PCC 8801 / RF-1) (Cyanothece sp. (strain PCC 8801)).